Here is a 413-residue protein sequence, read N- to C-terminus: MATLTQKQNAPKKVFAFRWSGVNRKGQKVSGELQADSINTVKAELRKQGVNVTKVSKKSQGLFSKGGAKIKPMDIAIVSRQITTMLSAGVPLVQSLQIIARSHEKASMRELMGQIAADVETGTPMSEALRRHPRHFDALYCDLVEAGEQSGALETIYDRIATYREKSEALKSKIKKAMFYPAMVILVAIVVTSILLLFVIPQFEDIFKSFGAELPIFTQFVIGISRFMQHWWYVIFGGTAFAIFLYVRAWRASQKVKDNTDKFILTIPVVGMILHKAAMARFARTLSTTFSAGIPLVDALISAAGASGNYVYRTAVMAIRNEVVAGMQINVAMRTVDLFPDMVIQMVMIGEESGAIDDMLSKVATIFEQEVDDLVDGLTSLLEPLIMVVLGVLVGGMVVAMYLPIFKLGDLVG.

4 consecutive transmembrane segments (helical) span residues 180–200 (YPAMVILVAIVVTSILLLFVI), 227–247 (FMQHWWYVIFGGTAFAIFLYV), 286–306 (LSTTFSAGIPLVDALISAAGA), and 386–406 (IMVVLGVLVGGMVVAMYLPIF).

This sequence belongs to the GSP F family.

It is found in the cell inner membrane. Its function is as follows. Involved in the translocation of the type IV pilin. This chain is Type IV pilus assembly protein TapC (tapC), found in Aeromonas hydrophila.